The sequence spans 122 residues: Large ribosomal subunit protein uL14 (122 aa).

This sequence belongs to the universal ribosomal protein uL14 family. As to quaternary structure, part of the 50S ribosomal subunit. Forms a cluster with proteins L3 and L19. In the 70S ribosome, L14 and L19 interact and together make contacts with the 16S rRNA in bridges B5 and B8.

Functionally, binds to 23S rRNA. Forms part of two intersubunit bridges in the 70S ribosome. The sequence is that of Large ribosomal subunit protein uL14 from Rickettsia felis (strain ATCC VR-1525 / URRWXCal2) (Rickettsia azadi).